The following is a 444-amino-acid chain: Pentatricopeptide repeat-containing protein At4g35850, mitochondrial (444 aa).

Residues 1 to 25 (MKFLMQSISGRNRSLVRALVSRRYF) constitute a mitochondrion transit peptide. PPR repeat units follow at residues 40–74 (DLSE…GVQP), 75–109 (TADI…GIAP), 110–144 (DVNL…DVKP), 145–179 (NGQT…GVGL), 255–289 (NLTV…GKDT), and 290–325 (DTYC…KIPA).

This sequence belongs to the PPR family. P subfamily.

It localises to the mitochondrion. The polypeptide is Pentatricopeptide repeat-containing protein At4g35850, mitochondrial (Arabidopsis thaliana (Mouse-ear cress)).